The primary structure comprises 371 residues: Glycosyltransferase 8 domain-containing protein 1 (371 aa).

Residues 1-5 (MSFRK) are Cytoplasmic-facing. The helical; Signal-anchor for type II membrane protein transmembrane segment at 6–26 (VTIIIWALAVILFLLALHHNF) threads the bilayer. The Lumenal portion of the chain corresponds to 27–371 (LSLSSLLRND…RRHMDTSNIK (345 aa)). Asparagine 257 carries N-linked (GlcNAc...) asparagine glycosylation.

The protein belongs to the glycosyltransferase 8 family.

Its subcellular location is the membrane. The sequence is that of Glycosyltransferase 8 domain-containing protein 1 (Glt8d1) from Rattus norvegicus (Rat).